We begin with the raw amino-acid sequence, 296 residues long: Protoheme IX farnesyltransferase (296 aa).

Residues 1–9 lie on the Cytoplasmic side of the membrane; the sequence is MIFKQYLQV. Residues 10 to 28 form a helical membrane-spanning segment; sequence TKPGIIFGNLISVIGGFLL. The Periplasmic portion of the chain corresponds to 29 to 37; it reads ASKGSIDYP. Residues 38–56 form a helical membrane-spanning segment; that stretch reads LFIYTLVGVSLVVASGCVF. Over 57-78 the chain is Cytoplasmic; that stretch reads NNYIDRDIDRKMERTKNRVLVK. A helical transmembrane segment spans residues 79–97; that stretch reads GLISPAVSLVYATLLGIAG. Residues 98–107 are Periplasmic-facing; the sequence is FMLLWFGANP. The helical transmembrane segment at 108–126 threads the bilayer; it reads LACWLGVMGFVVYVGVYSL. Topologically, residues 127 to 197 are cytoplasmic; the sequence is YMKRHSVYGT…YQAANIPVLP (71 aa). Residues 198–216 traverse the membrane as a helical segment; that stretch reads VVKGISVAKNHITLYIIAF. The Periplasmic portion of the chain corresponds to 217-228; sequence AVATLMLSLGGY. The chain crosses the membrane as a helical span at residues 229–247; the sequence is AGYKYLVVAAAVSVWWLGM. Residues 248–268 lie on the Cytoplasmic side of the membrane; sequence ALRGYKVADDRIWARKLFGFS. The helical transmembrane segment at 269–287 threads the bilayer; the sequence is IIAITALSVMMSVDFMVPD. Residues 288–296 lie on the Periplasmic side of the membrane; that stretch reads SHTLLAAVW.

This sequence belongs to the UbiA prenyltransferase family. Protoheme IX farnesyltransferase subfamily.

It localises to the cell inner membrane. It catalyses the reaction heme b + (2E,6E)-farnesyl diphosphate + H2O = Fe(II)-heme o + diphosphate. It functions in the pathway porphyrin-containing compound metabolism; heme O biosynthesis; heme O from protoheme: step 1/1. Functionally, converts heme B (protoheme IX) to heme O by substitution of the vinyl group on carbon 2 of heme B porphyrin ring with a hydroxyethyl farnesyl side group. The polypeptide is Protoheme IX farnesyltransferase (Escherichia coli O1:K1 / APEC).